We begin with the raw amino-acid sequence, 274 residues long: Phosphoribosylaminoimidazole-succinocarboxamide synthase (274 aa).

Belongs to the SAICAR synthetase family.

The catalysed reaction is 5-amino-1-(5-phospho-D-ribosyl)imidazole-4-carboxylate + L-aspartate + ATP = (2S)-2-[5-amino-1-(5-phospho-beta-D-ribosyl)imidazole-4-carboxamido]succinate + ADP + phosphate + 2 H(+). The protein operates within purine metabolism; IMP biosynthesis via de novo pathway; 5-amino-1-(5-phospho-D-ribosyl)imidazole-4-carboxamide from 5-amino-1-(5-phospho-D-ribosyl)imidazole-4-carboxylate: step 1/2. This Nitrosopumilus maritimus (strain SCM1) protein is Phosphoribosylaminoimidazole-succinocarboxamide synthase.